The primary structure comprises 400 residues: Deoxyguanosinetriphosphate triphosphohydrolase-like protein (400 aa).

An HD domain is found at 76–204; the sequence is RLTHTLEVAQ…VNIADPLAYC (129 aa).

This sequence belongs to the dGTPase family. Type 2 subfamily.

This Syntrophus aciditrophicus (strain SB) protein is Deoxyguanosinetriphosphate triphosphohydrolase-like protein.